Here is a 139-residue protein sequence, read N- to C-terminus: MTKYVILLAVLAFALHCDAKRFTRCGLVQELRRLGFDETLMSNWVCLVENESGRFTDKIGKVNKNGSRDYGLFQINDKYWCSKGTTPGKDCNVTCNQLLTDDISVAATCAKKIYKRHKFDAWYGWKNHCQHGLPDISDC.

A signal peptide spans 1-19 (MTKYVILLAVLAFALHCDA). Residues 20 to 139 (KRFTRCGLVQ…QHGLPDISDC (120 aa)) form the C-type lysozyme domain. 4 cysteine pairs are disulfide-bonded: C25-C139, C46-C129, C81-C95, and C91-C109. Active-site residues include E51 and D69.

It belongs to the glycosyl hydrolase 22 family.

It carries out the reaction Hydrolysis of (1-&gt;4)-beta-linkages between N-acetylmuramic acid and N-acetyl-D-glucosamine residues in a peptidoglycan and between N-acetyl-D-glucosamine residues in chitodextrins.. Lysozymes have primarily a bacteriolytic function; those in tissues and body fluids are associated with the monocyte-macrophage system and enhance the activity of immunoagents. This is Lysozyme from Hyalophora cecropia (Cecropia moth).